The chain runs to 58 residues: Parvalbumin beta 3 (58 aa).

Alanine 1 carries the post-translational modification N-acetylalanine. Residues 24–58 (FNYKTFFKFFAIIDQDHSGFIEEEELKALSDAETK) form the EF-hand domain. Residues aspartate 37, aspartate 39, serine 41, phenylalanine 43, glutamate 45, and glutamate 48 each contribute to the Ca(2+) site.

This sequence belongs to the parvalbumin family.

In muscle, parvalbumin is thought to be involved in relaxation after contraction. It binds two calcium ions. The chain is Parvalbumin beta 3 from Merluccius senegalensis (Senegalese hake).